The sequence spans 196 residues: Beta-crystallin A4 (196 aa).

An N-acetylthreonine modification is found at threonine 2. Positions 2 to 11 (TLQCTKSAGH) are N-terminal arm. Beta/gamma crystallin 'Greek key' domains are found at residues 12–51 (WRMVVWDEEGFQGRRHEFTAECPSVLELGFETVRSLKVLS) and 52–98 (GAWV…RPVA). A connecting peptide region spans residues 99–104 (CANHRD). Beta/gamma crystallin 'Greek key' domains lie at 105-146 (SRLT…HVQS) and 147-195 (GAWV…RRIQ).

Belongs to the beta/gamma-crystallin family. As to quaternary structure, homo/heterodimer, or complexes of higher-order. The structure of beta-crystallin oligomers seems to be stabilized through interactions between the N-terminal arms.

Its function is as follows. Crystallins are the dominant structural components of the vertebrate eye lens. The polypeptide is Beta-crystallin A4 (Cryba4) (Mus musculus (Mouse)).